We begin with the raw amino-acid sequence, 268 residues long: Ribosomal RNA small subunit methyltransferase A (268 aa).

Positions 18, 20, 45, 66, 91, and 112 each coordinate S-adenosyl-L-methionine.

The protein belongs to the class I-like SAM-binding methyltransferase superfamily. rRNA adenine N(6)-methyltransferase family. RsmA subfamily.

It is found in the cytoplasm. The enzyme catalyses adenosine(1518)/adenosine(1519) in 16S rRNA + 4 S-adenosyl-L-methionine = N(6)-dimethyladenosine(1518)/N(6)-dimethyladenosine(1519) in 16S rRNA + 4 S-adenosyl-L-homocysteine + 4 H(+). Its function is as follows. Specifically dimethylates two adjacent adenosines (A1518 and A1519) in the loop of a conserved hairpin near the 3'-end of 16S rRNA in the 30S particle. May play a critical role in biogenesis of 30S subunits. The chain is Ribosomal RNA small subunit methyltransferase A from Pseudoalteromonas translucida (strain TAC 125).